The sequence spans 107 residues: Iron-binding protein IscA (107 aa).

Cys35, Cys99, and Cys101 together coordinate Fe cation.

It belongs to the HesB/IscA family. As to quaternary structure, homodimer; may form tetramers and higher multimers. It depends on Fe cation as a cofactor.

Its function is as follows. Is able to transfer iron-sulfur clusters to apo-ferredoxin. Multiple cycles of [2Fe2S] cluster formation and transfer are observed, suggesting that IscA acts catalytically. Recruits intracellular free iron so as to provide iron for the assembly of transient iron-sulfur cluster in IscU in the presence of IscS, L-cysteine and the thioredoxin reductase system TrxA/TrxB. The protein is Iron-binding protein IscA of Salmonella agona (strain SL483).